A 415-amino-acid chain; its full sequence is Serine hydroxymethyltransferase 1 (415 aa).

Residues Leu-122 and 126-128 (GHL) each bind (6S)-5,6,7,8-tetrahydrofolate. Residue Lys-230 is modified to N6-(pyridoxal phosphate)lysine.

This sequence belongs to the SHMT family. In terms of assembly, homodimer. Requires pyridoxal 5'-phosphate as cofactor.

It localises to the cytoplasm. The catalysed reaction is (6R)-5,10-methylene-5,6,7,8-tetrahydrofolate + glycine + H2O = (6S)-5,6,7,8-tetrahydrofolate + L-serine. It participates in one-carbon metabolism; tetrahydrofolate interconversion. It functions in the pathway amino-acid biosynthesis; glycine biosynthesis; glycine from L-serine: step 1/1. Its function is as follows. Catalyzes the reversible interconversion of serine and glycine with tetrahydrofolate (THF) serving as the one-carbon carrier. This reaction serves as the major source of one-carbon groups required for the biosynthesis of purines, thymidylate, methionine, and other important biomolecules. Also exhibits THF-independent aldolase activity toward beta-hydroxyamino acids, producing glycine and aldehydes, via a retro-aldol mechanism. In Burkholderia mallei (strain ATCC 23344), this protein is Serine hydroxymethyltransferase 1.